Consider the following 274-residue polypeptide: Penicillin-insensitive murein endopeptidase (274 aa).

Residues 1-19 (MKKTALALLALLVSSASLA) form the signal peptide. 3 cysteine pairs are disulfide-bonded: Cys-44–Cys-265, Cys-187–Cys-235, and Cys-216–Cys-223. His-110, His-113, Asp-120, Asp-147, His-150, and His-211 together coordinate Zn(2+). Positions 225 to 274 (DQPLPPPGDGCGAELQSWFEPPEPGTTKPEKKTPPPLPPSCQALLDEHVL) are disordered.

It belongs to the peptidase M74 family. Dimer. It depends on Zn(2+) as a cofactor.

It is found in the periplasm. Functionally, murein endopeptidase that cleaves the D-alanyl-meso-2,6-diamino-pimelyl amide bond that connects peptidoglycan strands. Likely plays a role in the removal of murein from the sacculus. In Citrobacter koseri (strain ATCC BAA-895 / CDC 4225-83 / SGSC4696), this protein is Penicillin-insensitive murein endopeptidase.